The primary structure comprises 213 residues: Na(+)-translocating NADH-quinone reductase subunit D (213 aa).

The next 7 helical transmembrane spans lie at 21-41, 42-62, 77-97, 101-121, 131-151, 153-173, and 183-203; these read PLIA…VNTA, LTMG…VSLL, IIIS…FFDI, LSVF…AESL, FLDG…VSII, EFFG…FYAS, and FGLM…IWGV.

This sequence belongs to the NqrDE/RnfAE family. As to quaternary structure, composed of six subunits; NqrA, NqrB, NqrC, NqrD, NqrE and NqrF.

The protein resides in the cell inner membrane. It catalyses the reaction a ubiquinone + n Na(+)(in) + NADH + H(+) = a ubiquinol + n Na(+)(out) + NAD(+). Functionally, NQR complex catalyzes the reduction of ubiquinone-1 to ubiquinol by two successive reactions, coupled with the transport of Na(+) ions from the cytoplasm to the periplasm. NqrA to NqrE are probably involved in the second step, the conversion of ubisemiquinone to ubiquinol. The protein is Na(+)-translocating NADH-quinone reductase subunit D of Chlamydia abortus (strain DSM 27085 / S26/3) (Chlamydophila abortus).